The chain runs to 439 residues: MDLGTTKYIIYTELIADGYVEKHDVIGAIFGQTEGLLSNELDLRDLQKSGRIGRIDVDLENINGKSFAKITLPSSLDKVETSILAATLETIDRVGPCFATVKITEVEDIRVSKRQYITNRARSILRKLMDEMIDTYEITEEIKESLRTEEIMEFGPENLPCGPNVVHSDSIIVVEGRADVLTLLRCGIKNTVAVEGTSVPKSIMELTKKKTTTAFTDGDRGGELILKELLQTCDIDYVARAPYGKEVEGTSKKEIMKCLRAKVPVEQIVGNNCNNSCNVSEVINSNSPEEIVESVTPKYFEKVETPVTEPVFDDNVVEEETVIVEPVKKTETEIIDVDAANESQVDKKFSGVKEIVDSIKNTGNVKFVVDGTEKTNTFKEFLTNIHEIKKMDFFAADMPISQKIVDLLYDKTPIIVGKEINVTKKPVNLRLFSFDEIVA.

The 75-residue stretch at 169–243 folds into the Toprim domain; it reads DSIIVVEGRA…DIDYVARAPY (75 aa). The Mg(2+) site is built by Glu-175, Asp-217, and Asp-219.

It belongs to the archaeal DnaG primase family. In terms of assembly, forms a ternary complex with MCM helicase and DNA. Requires Mg(2+) as cofactor.

It carries out the reaction ssDNA + n NTP = ssDNA/pppN(pN)n-1 hybrid + (n-1) diphosphate.. Functionally, RNA polymerase that catalyzes the synthesis of short RNA molecules used as primers for DNA polymerase during DNA replication. The protein is DNA primase DnaG of Methanococcus maripaludis (strain C7 / ATCC BAA-1331).